Consider the following 351-residue polypeptide: Probable galacturonosyltransferase-like 4 (351 aa).

At M1–Y8 the chain is on the cytoplasmic side. A helical; Signal-anchor for type II membrane protein transmembrane segment spans residues T9–V29. Residues R30 to E351 are Lumenal-facing. Residues N96 and N203 are each glycosylated (N-linked (GlcNAc...) asparagine).

This sequence belongs to the glycosyltransferase 8 family.

Its subcellular location is the golgi apparatus membrane. Its pathway is glycan metabolism; pectin biosynthesis. May be involved in pectin and/or xylans biosynthesis in cell walls. The chain is Probable galacturonosyltransferase-like 4 (GATL4) from Arabidopsis thaliana (Mouse-ear cress).